The sequence spans 186 residues: Casparian strip membrane protein 1 (186 aa).

Over 1–26 the chain is Cytoplasmic; sequence MKSSPAELISEAKSSTQNSKMKRAVS. Residues 27-47 form a helical membrane-spanning segment; the sequence is VLDFILRLIAVVATLASAIAM. Topologically, residues 48 to 74 are extracellular; it reads GTTDESLPFFTQFIRFRAEYDDLPTLR. Residues 75–95 form a helical membrane-spanning segment; it reads LFVVASAFASGYLILSLPLSI. Residues 96–107 lie on the Cytoplasmic side of the membrane; sequence LHITRSSARRTR. The helical transmembrane segment at 108 to 128 threads the bilayer; that stretch reads VILIILDMVMLTSLTAASSAA. Topologically, residues 129–161 are extracellular; sequence AAIVYLAHKGNAKANWFAFCQQYDSFCERISGS. Residues 162 to 182 traverse the membrane as a helical segment; it reads LIGSFIAIPLFIMLILFSALV. The Cytoplasmic segment spans residues 183–186; that stretch reads LSKR.

It belongs to the Casparian strip membrane proteins (CASP) family. As to quaternary structure, homodimer and heterodimers.

The protein localises to the cell membrane. Its function is as follows. Regulates membrane-cell wall junctions and localized cell wall deposition. Required for establishment of the Casparian strip membrane domain (CSD) and the subsequent formation of Casparian strips, a cell wall modification of the root endodermis that determines an apoplastic barrier between the intraorganismal apoplasm and the extraorganismal apoplasm and prevents lateral diffusion. This Lotus japonicus (Lotus corniculatus var. japonicus) protein is Casparian strip membrane protein 1.